Here is a 377-residue protein sequence, read N- to C-terminus: MTTENFGFKVLARDGAARQGEISMPRGVVRTPAFMPVGTAGTVKAMYMDQVKELGADIILGNTYHLMLRPGAERVARLGGLHEFGGWKGPILTDSGGFQVMSLAQLRKLNEHGVTFRSHIDGKAYEMTPERSIEIQGLLDSDIQMQLDECVALPSPEKNTERAMELSLRWAERCKVAFGDQPGKAMFGIVQGGDIARLRERSAEALKAMDLKGYSVGGLAVGEPQEVMLDMLEVVCPILPTEKPRYLMGVGTPDDILKSVARGIDMFDCVMPTRAGRHGLAFTRFGKVNLRNARHAEDHRPLDPQSDCPASRDYSRAYLHHLVKSGEALGAMLLTWNNLAYYQYLMKGIRAAIADGNFSDFTAETTEGWARGDMPAL.

Residue Asp94 is the Proton acceptor of the active site. Substrate-binding positions include 94-98 (DSGGF), Asp148, Gln191, and Gly218. An RNA binding region spans residues 249–255 (GVGTPDD). Residue Asp268 is the Nucleophile of the active site. Positions 273–277 (TRAGR) are RNA binding; important for wobble base 34 recognition.

The protein belongs to the queuine tRNA-ribosyltransferase family. In terms of assembly, homodimer. Within each dimer, one monomer is responsible for RNA recognition and catalysis, while the other monomer binds to the replacement base PreQ1.

The catalysed reaction is 7-aminomethyl-7-carbaguanine + guanosine(34) in tRNA = 7-aminomethyl-7-carbaguanosine(34) in tRNA + guanine. It participates in tRNA modification; tRNA-queuosine biosynthesis. Functionally, catalyzes the base-exchange of a guanine (G) residue with the queuine precursor 7-aminomethyl-7-deazaguanine (PreQ1) at position 34 (anticodon wobble position) in tRNAs with GU(N) anticodons (tRNA-Asp, -Asn, -His and -Tyr). Catalysis occurs through a double-displacement mechanism. The nucleophile active site attacks the C1' of nucleotide 34 to detach the guanine base from the RNA, forming a covalent enzyme-RNA intermediate. The proton acceptor active site deprotonates the incoming PreQ1, allowing a nucleophilic attack on the C1' of the ribose to form the product. After dissociation, two additional enzymatic reactions on the tRNA convert PreQ1 to queuine (Q), resulting in the hypermodified nucleoside queuosine (7-(((4,5-cis-dihydroxy-2-cyclopenten-1-yl)amino)methyl)-7-deazaguanosine). The sequence is that of Queuine tRNA-ribosyltransferase from Brucella suis biovar 1 (strain 1330).